Reading from the N-terminus, the 442-residue chain is Histidinol dehydrogenase (442 aa).

3 residues coordinate NAD(+): tyrosine 138, glutamine 199, and asparagine 222. Positions 245, 267, and 270 each coordinate substrate. Glutamine 267 and histidine 270 together coordinate Zn(2+). Active-site proton acceptor residues include glutamate 335 and histidine 336. Positions 336, 369, 423, and 428 each coordinate substrate. Residue aspartate 369 coordinates Zn(2+). Histidine 428 contacts Zn(2+).

It belongs to the histidinol dehydrogenase family. Zn(2+) serves as cofactor.

It catalyses the reaction L-histidinol + 2 NAD(+) + H2O = L-histidine + 2 NADH + 3 H(+). The protein operates within amino-acid biosynthesis; L-histidine biosynthesis; L-histidine from 5-phospho-alpha-D-ribose 1-diphosphate: step 9/9. Functionally, catalyzes the sequential NAD-dependent oxidations of L-histidinol to L-histidinaldehyde and then to L-histidine. This is Histidinol dehydrogenase from Ralstonia nicotianae (strain ATCC BAA-1114 / GMI1000) (Ralstonia solanacearum).